The sequence spans 122 residues: S-protein homolog 23 (122 aa).

Residues 1–20 form the signal peptide; sequence MQNLSILLVCSFCILGHVSS. N-linked (GlcNAc...) asparagine glycosylation occurs at Asn-86.

The protein belongs to the plant self-incompatibility (S1) protein family.

The protein localises to the secreted. This chain is S-protein homolog 23, found in Arabidopsis thaliana (Mouse-ear cress).